A 125-amino-acid polypeptide reads, in one-letter code: Histone H2B (125 aa).

Positions 1 to 32 (MAPKVRAAKKGEKRVGKAKSGTAETAKRRRGK) are disordered. O-linked (GlcNAc) serine glycosylation is present at serine 112. Lysine 120 participates in a covalent cross-link: Glycyl lysine isopeptide (Lys-Gly) (interchain with G-Cter in ubiquitin).

The protein belongs to the histone H2B family. In terms of assembly, the nucleosome is a histone octamer containing two molecules each of H2A, H2B, H3 and H4 assembled in one H3-H4 heterotetramer and two H2A-H2B heterodimers. The octamer wraps approximately 147 bp of DNA. Post-translationally, monoubiquitination of Lys-120 gives a specific tag for epigenetic transcriptional activation and is also prerequisite for histone H3 'Lys-4' and 'Lys-79' methylation. In terms of processing, glcNAcylation at Ser-112 promotes monoubiquitination of Lys-120. It fluctuates in response to extracellular glucose, and associates with transcribed genes.

Its subcellular location is the nucleus. It is found in the chromosome. In terms of biological role, core component of nucleosome. Nucleosomes wrap and compact DNA into chromatin, limiting DNA accessibility to the cellular machineries which require DNA as a template. Histones thereby play a central role in transcription regulation, DNA repair, DNA replication and chromosomal stability. DNA accessibility is regulated via a complex set of post-translational modifications of histones, also called histone code, and nucleosome remodeling. The polypeptide is Histone H2B (Acropora formosa (Staghorn coral)).